The chain runs to 643 residues: Phosphomethylpyrimidine synthase (643 aa).

Substrate contacts are provided by residues Asn-248, Met-277, Tyr-306, His-342, 362-364 (SRG), 403-406 (DGLR), and Glu-442. His-446 lines the Zn(2+) pocket. Tyr-469 is a substrate binding site. Zn(2+) is bound at residue His-510. Residues Cys-590, Cys-593, and Cys-598 each coordinate [4Fe-4S] cluster.

The protein belongs to the ThiC family. In terms of assembly, homodimer. Requires [4Fe-4S] cluster as cofactor.

The enzyme catalyses 5-amino-1-(5-phospho-beta-D-ribosyl)imidazole + S-adenosyl-L-methionine = 4-amino-2-methyl-5-(phosphooxymethyl)pyrimidine + CO + 5'-deoxyadenosine + formate + L-methionine + 3 H(+). It functions in the pathway cofactor biosynthesis; thiamine diphosphate biosynthesis. In terms of biological role, catalyzes the synthesis of the hydroxymethylpyrimidine phosphate (HMP-P) moiety of thiamine from aminoimidazole ribotide (AIR) in a radical S-adenosyl-L-methionine (SAM)-dependent reaction. The polypeptide is Phosphomethylpyrimidine synthase (Paraburkholderia xenovorans (strain LB400)).